The primary structure comprises 377 residues: Presenilin-associated rhomboid-like protein, mitochondrial (377 aa).

A mitochondrion-targeting transit peptide spans 1–50 (MALYSWVQRGWRCGQTWAPLLGGGYRELSATQARQLLGRRFNLLLQQKCG). Topologically, residues 51–95 (FRKAPRKVEPRRSDTGSSGEAYKRSALIPPLEETVFYPSPYPVRT) are mitochondrial matrix. Phosphoserine occurs at positions 63 and 68. The chain crosses the membrane as a helical span at residues 96 to 116 (LLKPFFFTVGFTGCAFGSAAI). The Mitochondrial intermembrane portion of the chain corresponds to 117 to 165 (WQYESLKSRVQSYFDGIKADWLDSIRPQKEGNLRKEINKWWNSLSDGQR). Residues 166-186 (TVTGIIAANALVFCLWRVPSL) form a helical membrane-spanning segment. The Mitochondrial matrix segment spans residues 187-214 (HRTMIRYFTSNPASKVLCSPMLLSTFSH). The helical transmembrane segment at 215–235 (FSLFHMAANMYVLWSFSTSIV) threads the bilayer. Residues 236-242 (NILGQEQ) are Mitochondrial intermembrane-facing. A helical membrane pass occupies residues 243 to 263 (FVAVYLSAGVISNFVSYVCKV). Residues 264–268 (ATGRY) lie on the Mitochondrial matrix side of the membrane. Residues 269 to 289 (GPSLGASGAIMTVLAAVCTKI) traverse the membrane as a helical segment. Catalysis depends on serine 275, which acts as the Nucleophile. The Mitochondrial intermembrane segment spans residues 290–293 (PEGR). A helical transmembrane segment spans residues 294 to 314 (LAIIFLPVFTFTAGNALKAII). Residues 315–331 (AMDTAGMILGWKFFDHA) lie on the Mitochondrial matrix side of the membrane. Residues 332–352 (AHLGGALFGIWYITYGHELIW) traverse the membrane as a helical segment. Histidine 333 is a catalytic residue. At 353–377 (KNREPLVKIWHEIRTNGPKKGGGSK) the chain is on the mitochondrial intermembrane side.

This sequence belongs to the peptidase S54 family. In terms of assembly, interacts with PSEN1 and PSEN2. Binds OPA1. In terms of processing, P-beta is proteolytically processed (beta-cleavage) in a PARL-dependent manner.

The protein localises to the mitochondrion inner membrane. It localises to the nucleus. The enzyme catalyses Cleaves type-1 transmembrane domains using a catalytic dyad composed of serine and histidine that are contributed by different transmembrane domains.. In terms of biological role, required for the control of apoptosis during postnatal growth. Essential for proteolytic processing of an antiapoptotic form of OPA1 which prevents the release of mitochondrial cytochrome c in response to intrinsic apoptotic signals. Required for the maturation of PINK1 into its 52kDa mature form after its cleavage by mitochondrial-processing peptidase (MPP). Promotes cleavage of serine/threonine-protein phosphatase PGAM5 in damaged mitochondria in response to loss of mitochondrial membrane potential. Mediates differential cleavage of PINK1 and PGAM5 depending on the health status of mitochondria, disassociating from PINK1 and associating with PGAM5 in response to mitochondrial membrane potential loss. Required for processing of CLPB into a form with higher protein disaggregase activity by removing an autoinhibitory N-terminal peptide. Promotes processing of DIABLO/SMAC in the mitochondrion which is required for DIABLO apoptotic activity. Also required for cleavage of STARD7 and TTC19. Promotes changes in mitochondria morphology regulated by phosphorylation of P-beta domain. The polypeptide is Presenilin-associated rhomboid-like protein, mitochondrial (Rattus norvegicus (Rat)).